Consider the following 1075-residue polypeptide: Protein nervous wreck (1075 aa).

The 279-residue stretch at 11–289 folds into the F-BAR domain; that stretch reads VKFLKNLHTE…QAQQLTREYN (279 aa). Disordered regions lie at residues 361–381 and 431–536; these read LRDS…LDTK and SASS…DEPI. Residues 431–453 are compositionally biased toward polar residues; the sequence is SASSISMRTDASGQGENPSSDSF. A compositionally biased stretch (basic and acidic residues) spans 469–482; that stretch reads PKQEQQLSRDRTFS. A compositionally biased stretch (low complexity) spans 493–512; sequence SAAAASSAAAASSSMMASSA. SH3 domains follow at residues 542–603 and 658–721; these read EAIF…IDQE and SDVE…ECDE. 3 disordered regions span residues 722-747, 769-837, and 864-917; these read MGEP…LPPA, SQDT…EKGA, and GADK…EGNA. 2 stretches are compositionally biased toward pro residues: residues 733-747 and 809-818; these read SPPP…LPPA and QPPPSLPPPQ. Residues 819-837 are compositionally biased toward low complexity; that stretch reads LAKAGGSAPGSGSKVEKGA. Positions 883-897 are enriched in basic and acidic residues; that stretch reads VSKEQPAEVAKKPDI.

Homodimer. Interacts (via SH3 domain 1) with WASp. Interacts (via SH3 domain 1) with shi/dynamin. Interacts (via SH3 domain 2) with Dap160. Interacts (via F-BAR domain) with SH3PX1. Interacts (via SH3 domain 2) with Snx16. Identified in a complex with Syn and Syt1. As to expression, detected in larval body wall muscle. Detected at the neuromuscular junction, on motoneuron axons and axon terminals, at synaptic boutons in the periactive zone surrounding the synapse (at protein level). Detected on motoneuron axons and axon terminals, at synaptic boutons in the periactive zone surrounding the synapse.

It is found in the endomembrane system. It localises to the synapse. The protein localises to the cell projection. The protein resides in the axon. Its subcellular location is the presynaptic cell membrane. It is found in the cytoplasmic vesicle. It localises to the secretory vesicle. The protein localises to the synaptic vesicle. The protein resides in the recycling endosome. Functionally, adapter protein that provides a link between vesicular membrane traffic and the actin assembly machinery. Acts together with Cdc42 to stimulate actin nucleation mediated by WASp and the ARP2/3 complex. Binds to membranes enriched in phosphatidylinositol 4,5-bisphosphate and causes local membrane deformation. Required for normal structure and function of synapses at the neuromuscular junction. Plays a role in synaptic vesicle trafficking. Required for the release of a normal number of synaptic vesicles per action potential. The sequence is that of Protein nervous wreck from Drosophila melanogaster (Fruit fly).